The sequence spans 233 residues: uncharacterized protein (233 aa).

Disordered stretches follow at residues 1-159 and 181-206; these read MGKH…NEKL and MGVK…QDKM. Positions 36-115 are enriched in basic and acidic residues; it reads RDRSRSPHKE…RRDDKNRLSA (80 aa). The segment covering 135-148 has biased composition (low complexity); sequence SSSSNTTDTASSSS. Residues 189–206 show a composition bias toward basic and acidic residues; it reads PTDDSSRLSDEKNRQDKM.

This is an uncharacterized protein from Caenorhabditis elegans.